The primary structure comprises 231 residues: Maleylacetoacetate isomerase maiA (231 aa).

Positions 7 to 93 constitute a GST N-terminal domain; that stretch reads PKVTLYTYFR…YLEEITPASS (87 aa). Residues 102 to 224 form the GST C-terminal domain; that stretch reads NPEARAVVRT…HWRTQPDTPE (123 aa).

Belongs to the GST superfamily. Zeta family.

The enzyme catalyses 4-maleylacetoacetate = 4-fumarylacetoacetate. Its pathway is amino-acid degradation; L-phenylalanine degradation; acetoacetate and fumarate from L-phenylalanine: step 5/6. Its function is as follows. Maleylacetoacetate isomerase; part of the L-tyrosine degradation gene cluster that mediates the biosynthesis of the brownish pigment pyomelanin as an alternative melanin. The 4-hydroxyphenylpyruvate dioxygenase hppD catalyzes the conversion of 4-hydroxyphenylpyruvate to homogentisic acid (HGA). The protein hmgX is crucial for this conversion and thus, probably functions as an accessory factor to mediate specific activity of hppD. The homogentisate 1,2-dioxygenase hmgA is then involved in the cleavage of the aromatic ring of HGA and its conversion to 4-maleylacetoacetate. When hmgA activity is lowered by the cell wall integrity (CWI) signaling pathway, HGA accumulates and leads to the production of pyomelanin through benzoquinone acetic acid after oxidation and polymerization. On the opposite, in non-stress conditions, both hppD and hmgA activities are balanced and HGA is degraded into 4-maleylacetoacetate. 4-maleylacetoacetate is further converted to 4-fumarylacetoacetate by the maleylacetoacetate isomerase maiA, which is degraded into fumarate and acetoacetate by the fumarylacetoacetase fahA. This is Maleylacetoacetate isomerase maiA from Aspergillus fumigatus (strain ATCC MYA-4609 / CBS 101355 / FGSC A1100 / Af293) (Neosartorya fumigata).